Reading from the N-terminus, the 274-residue chain is NH(3)-dependent NAD(+) synthetase (274 aa).

Position 46–53 (46–53 (GISGGQDS)) interacts with ATP. D52 contributes to the Mg(2+) binding site. R140 lines the deamido-NAD(+) pocket. T160 is a binding site for ATP. Position 165 (E165) interacts with Mg(2+). The deamido-NAD(+) site is built by K173 and D180. ATP contacts are provided by K189 and T211. 260 to 261 (HK) lines the deamido-NAD(+) pocket.

This sequence belongs to the NAD synthetase family. In terms of assembly, homodimer.

It catalyses the reaction deamido-NAD(+) + NH4(+) + ATP = AMP + diphosphate + NAD(+) + H(+). It participates in cofactor biosynthesis; NAD(+) biosynthesis; NAD(+) from deamido-NAD(+) (ammonia route): step 1/1. Functionally, catalyzes the ATP-dependent amidation of deamido-NAD to form NAD. Uses ammonia as a nitrogen source. This Pectobacterium atrosepticum (strain SCRI 1043 / ATCC BAA-672) (Erwinia carotovora subsp. atroseptica) protein is NH(3)-dependent NAD(+) synthetase.